A 1936-amino-acid polypeptide reads, in one-letter code: Potassium channel K1 (1936 aa).

6 consecutive transmembrane segments (helical) span residues I175–L195, V598–A618, G643–F663, Y670–M690, T701–T721, and I734–M754. Positions F772–Y788 form an intramembrane region, pore-forming. The helical transmembrane segment at V791–G811 threads the bilayer. Positions D1141–M1185 form a coiled coil.

It localises to the membrane. The enzyme catalyses K(+)(in) = K(+)(out). Partially inhibited by Ba(2+) and quinine. Probably insensitive to tetraethylammonium (TEA). Functionally, likely a predominant potassium channel in the erythrocytic stages of parasites. Mediates transmembrane potassium transport. Required for the development of oocysts in the mosquito midgut. This Plasmodium berghei (strain Anka) protein is Potassium channel K1.